We begin with the raw amino-acid sequence, 128 residues long: MRHYEVVFIVHPDQSEQVPAMIERYKAIVTARNGQIHRLEDWGRRQMAYPIQKVHKAHYVLMNIECDGEALGELEHAFKFNDAVLRHLVVKTKAAVTTPSPMMKEEKSRSLTAAPATDEAKPAEAESA.

A disordered region spans residues 97-128 (TTPSPMMKEEKSRSLTAAPATDEAKPAEAESA). Residues 118–128 (DEAKPAEAESA) show a composition bias toward basic and acidic residues.

This sequence belongs to the bacterial ribosomal protein bS6 family.

Functionally, binds together with bS18 to 16S ribosomal RNA. In Aromatoleum aromaticum (strain DSM 19018 / LMG 30748 / EbN1) (Azoarcus sp. (strain EbN1)), this protein is Small ribosomal subunit protein bS6.